Here is a 241-residue protein sequence, read N- to C-terminus: Ribulose-phosphate 3-epimerase 2 (241 aa).

S21 serves as a coordination point for substrate. Positions 46, 48, and 79 each coordinate a divalent metal cation. The active-site Proton acceptor is the D48. Substrate is bound by residues H79, 155-158 (GFGG), 192-194 (DGG), and 214-215 (GS). An a divalent metal cation-binding site is contributed by D192. D192 (proton donor) is an active-site residue.

This sequence belongs to the ribulose-phosphate 3-epimerase family. It depends on a divalent metal cation as a cofactor.

It carries out the reaction D-ribulose 5-phosphate = D-xylulose 5-phosphate. The protein operates within carbohydrate degradation. Functionally, catalyzes the reversible epimerization of D-ribulose 5-phosphate to D-xylulose 5-phosphate. In Cupriavidus necator (strain ATCC 17699 / DSM 428 / KCTC 22496 / NCIMB 10442 / H16 / Stanier 337) (Ralstonia eutropha), this protein is Ribulose-phosphate 3-epimerase 2.